The sequence spans 410 residues: Argininosuccinate synthase (410 aa).

10–18 contacts ATP; sequence AYSGGLDTS. Residues Y88 and S93 each coordinate L-citrulline. G118 contacts ATP. L-aspartate is bound by residues T120, N124, and D125. An L-citrulline-binding site is contributed by N124. L-citrulline contacts are provided by R128, S177, S186, E262, and Y274.

This sequence belongs to the argininosuccinate synthase family. Type 1 subfamily. Homotetramer.

The protein resides in the cytoplasm. The enzyme catalyses L-citrulline + L-aspartate + ATP = 2-(N(omega)-L-arginino)succinate + AMP + diphosphate + H(+). It functions in the pathway amino-acid biosynthesis; L-arginine biosynthesis; L-arginine from L-ornithine and carbamoyl phosphate: step 2/3. The sequence is that of Argininosuccinate synthase from Caldanaerobacter subterraneus subsp. tengcongensis (strain DSM 15242 / JCM 11007 / NBRC 100824 / MB4) (Thermoanaerobacter tengcongensis).